The primary structure comprises 285 residues: 4-hydroxybenzoate octaprenyltransferase (285 aa).

Helical transmembrane passes span 20-37 (IGIY…WLAA), 96-116 (FFFV…PFTI), 138-158 (WPQA…FAAI), 166-186 (AWVI…AYAV), 211-231 (IIGF…DLFG), 234-254 (WLYY…QYLL), and 262-282 (AFKA…GIML).

This sequence belongs to the UbiA prenyltransferase family. Mg(2+) serves as cofactor.

Its subcellular location is the cell inner membrane. It catalyses the reaction all-trans-octaprenyl diphosphate + 4-hydroxybenzoate = 4-hydroxy-3-(all-trans-octaprenyl)benzoate + diphosphate. Its pathway is cofactor biosynthesis; ubiquinone biosynthesis. Its function is as follows. Catalyzes the prenylation of para-hydroxybenzoate (PHB) with an all-trans polyprenyl group. Mediates the second step in the final reaction sequence of ubiquinone-8 (UQ-8) biosynthesis, which is the condensation of the polyisoprenoid side chain with PHB, generating the first membrane-bound Q intermediate 3-octaprenyl-4-hydroxybenzoate. This is 4-hydroxybenzoate octaprenyltransferase from Hydrogenovibrio crunogenus (strain DSM 25203 / XCL-2) (Thiomicrospira crunogena).